Reading from the N-terminus, the 185-residue chain is TATA-box-binding protein (185 aa).

2 tandem repeats follow at residues 8–84 (IENI…VEML) and 99–175 (IQNM…LHEL).

The protein belongs to the TBP family.

Its function is as follows. General factor that plays a role in the activation of archaeal genes transcribed by RNA polymerase. Binds specifically to the TATA box promoter element which lies close to the position of transcription initiation. The chain is TATA-box-binding protein from Thermococcus sibiricus (strain DSM 12597 / MM 739).